The following is a 397-amino-acid chain: DNA-directed RNA polymerase subunit Rpo1C (397 aa).

It belongs to the RNA polymerase beta' chain family. In terms of assembly, part of the RNA polymerase complex.

It localises to the cytoplasm. It catalyses the reaction RNA(n) + a ribonucleoside 5'-triphosphate = RNA(n+1) + diphosphate. Its function is as follows. DNA-dependent RNA polymerase (RNAP) catalyzes the transcription of DNA into RNA using the four ribonucleoside triphosphates as substrates. Forms part of the jaw domain. The chain is DNA-directed RNA polymerase subunit Rpo1C from Methanosarcina acetivorans (strain ATCC 35395 / DSM 2834 / JCM 12185 / C2A).